Here is a 561-residue protein sequence, read N- to C-terminus: Malate synthase, glyoxysomal (561 aa).

Arg177 functions as the Proton acceptor in the catalytic mechanism. The Proton donor role is filled by Asp462. The Microbody targeting signal motif lies at 559–561 (SRL).

Belongs to the malate synthase family.

The protein localises to the glyoxysome. It carries out the reaction glyoxylate + acetyl-CoA + H2O = (S)-malate + CoA + H(+). Its pathway is carbohydrate metabolism; glyoxylate cycle; (S)-malate from isocitrate: step 2/2. In Brassica napus (Rape), this protein is Malate synthase, glyoxysomal.